A 271-amino-acid chain; its full sequence is Formamidopyrimidine-DNA glycosylase (271 aa).

Pro-2 serves as the catalytic Schiff-base intermediate with DNA. The active-site Proton donor is the Glu-3. Lys-56 functions as the Proton donor; for beta-elimination activity in the catalytic mechanism. Positions 89, 107, and 151 each coordinate DNA. The FPG-type zinc finger occupies 236–270; the sequence is MVYDRAGLPCRVCAAPIKSIRQGQRSSFYCATCQK. Arg-260 acts as the Proton donor; for delta-elimination activity in catalysis.

Belongs to the FPG family. As to quaternary structure, monomer. The cofactor is Zn(2+).

The enzyme catalyses Hydrolysis of DNA containing ring-opened 7-methylguanine residues, releasing 2,6-diamino-4-hydroxy-5-(N-methyl)formamidopyrimidine.. It catalyses the reaction 2'-deoxyribonucleotide-(2'-deoxyribose 5'-phosphate)-2'-deoxyribonucleotide-DNA = a 3'-end 2'-deoxyribonucleotide-(2,3-dehydro-2,3-deoxyribose 5'-phosphate)-DNA + a 5'-end 5'-phospho-2'-deoxyribonucleoside-DNA + H(+). Its function is as follows. Involved in base excision repair of DNA damaged by oxidation or by mutagenic agents. Acts as a DNA glycosylase that recognizes and removes damaged bases. Has a preference for oxidized purines, such as 7,8-dihydro-8-oxoguanine (8-oxoG). Has AP (apurinic/apyrimidinic) lyase activity and introduces nicks in the DNA strand. Cleaves the DNA backbone by beta-delta elimination to generate a single-strand break at the site of the removed base with both 3'- and 5'-phosphates. The protein is Formamidopyrimidine-DNA glycosylase of Polaromonas naphthalenivorans (strain CJ2).